An 873-amino-acid polypeptide reads, in one-letter code: Cilia- and flagella-associated protein 58 (873 aa).

Coiled coils occupy residues 106 to 609 (VDSA…VISE) and 642 to 832 (ETQY…QKRK). Residues 202-221 (QEIQHRQNEASRESRKKEKL) are disordered. The segment covering 204-221 (IQHRQNEASRESRKKEKL) has biased composition (basic and acidic residues).

This sequence belongs to the CFAP58 family. As to quaternary structure, interacts with ODFP2. In terms of tissue distribution, predominantly expressed in the testis. Also found at lower levels in ciliated cells and tissues such as neural progenitor cells and oviducts.

It localises to the cell projection. Its subcellular location is the cilium. The protein localises to the flagellum. It is found in the cytoplasm. The protein resides in the cytoskeleton. It localises to the microtubule organizing center. Its subcellular location is the centrosome. In terms of biological role, has an essential role in the assembly and organization of the sperm flagellar axoneme. Required for the elongation of the primary cilium and sperm flagellar midpiece via modulation of the Notch signaling pathway. The polypeptide is Cilia- and flagella-associated protein 58 (Mus musculus (Mouse)).